The sequence spans 635 residues: MYPLLETINSPADLRRLPRAQLKALADELRAFVLDSVSKTGGHLSSNLGTVELTVALHYVFNTPEDRLVWDVGHQTYPHKILTGRRDRMGSLRQFGGLSGFPRRDESPYDTFGTAHSSTSISAALGMALAAHQQGEDRHAVAIIGDGAMSAGMAFEALNNAGVHDDCKLLVVLNDNDMSISPPVGALNRYLAQLMSGRFYASAKNVGKQVLRVAPPLLELAKRLEAHAKGMVVPATLFENFGFNYIGPIDGHDLESLIPTLENIKHLKGPQFLHVVTKKGQGYKLAEADPVAYHGPGKFDPAMGLQKSSAPAKRTFTQVFGQWLCDMAEQDKRLVGITPAMREGSGMVEFHKRFPGRYHDVGIAEQHAVTFAAGMACEGLKPVVAIYSTFLQRGYDQLIHDVALQNLPVVFALDRAGLVGADGATHAGAYDIPFLRCIPNMSVACPADENECRKLLSSAFEQNHPVAVRYPRGAGAGVEPEPGLQPLPFGKGEIRREGSGVAILAFGTLLYPALQAAEKLGVTVVNMRWAKPLDTELLLKVAASHEALVTLEEGAIMGGAGSAVGEALQAAGLGKPLLQLGLKDEFIEHGDPAKLLALQGLDAAGIEAAVMARFGSVLQPEKSGKPAKPALKSVA.

Residues His74 and 115-117 (AHS) each bind thiamine diphosphate. Asp146 contributes to the Mg(2+) binding site. Residues 147 to 148 (GA), Asn176, Tyr283, and Glu365 each bind thiamine diphosphate. Residue Asn176 participates in Mg(2+) binding.

This sequence belongs to the transketolase family. DXPS subfamily. In terms of assembly, homodimer. Mg(2+) is required as a cofactor. It depends on thiamine diphosphate as a cofactor.

The enzyme catalyses D-glyceraldehyde 3-phosphate + pyruvate + H(+) = 1-deoxy-D-xylulose 5-phosphate + CO2. It functions in the pathway metabolic intermediate biosynthesis; 1-deoxy-D-xylulose 5-phosphate biosynthesis; 1-deoxy-D-xylulose 5-phosphate from D-glyceraldehyde 3-phosphate and pyruvate: step 1/1. Its function is as follows. Catalyzes the acyloin condensation reaction between C atoms 2 and 3 of pyruvate and glyceraldehyde 3-phosphate to yield 1-deoxy-D-xylulose-5-phosphate (DXP). The sequence is that of 1-deoxy-D-xylulose-5-phosphate synthase from Polaromonas sp. (strain JS666 / ATCC BAA-500).